A 507-amino-acid polypeptide reads, in one-letter code: Protein O-glucosyltransferase 3 (507 aa).

Residues 1–20 (MRRLPRALLLQLRLALLVAA) form the signal peptide. One copy of the Filamin repeat lies at 24–134 (EVLVSAPRSL…VAQSPYILKG (111 aa)). N61 and N306 each carry an N-linked (GlcNAc...) asparagine glycan. The short motif at 504 to 507 (REEL) is the Prevents secretion from ER element.

This sequence belongs to the KDELC family.

The protein resides in the endoplasmic reticulum lumen. The catalysed reaction is L-seryl-[EGF-like domain protein] + UDP-alpha-D-glucose = 3-O-(beta-D-glucosyl)-L-seryl-[EGF-like domain protein] + UDP + H(+). It catalyses the reaction L-seryl-[EGF-like domain protein] + UDP-alpha-D-xylose = 3-O-(beta-D-xylosyl)-L-seryl-[EGF-like domain protein] + UDP + H(+). The protein operates within protein modification; protein glycosylation. Functionally, protein glucosyltransferase that catalyzes the transfer of glucose from UDP-glucose to a serine residue within the consensus sequence peptide C-X-N-T-X-G-S-F-X-C. Can also catalyze the transfer of xylose from UDP-xylose but less efficiently. Specifically targets extracellular EGF repeats of proteins such as NOTCH1, NOTCH3, FBN1, FBN2 and LTBP1. May regulate the transport of NOTCH1 and NOTCH3 to the plasma membrane and thereby the Notch signaling pathway. This Homo sapiens (Human) protein is Protein O-glucosyltransferase 3.